Reading from the N-terminus, the 217-residue chain is Elongation factor Ts (217 aa).

The involved in Mg(2+) ion dislocation from EF-Tu stretch occupies residues 82-85 (TDFV).

The protein belongs to the EF-Ts family.

Its subcellular location is the cytoplasm. Associates with the EF-Tu.GDP complex and induces the exchange of GDP to GTP. It remains bound to the aminoacyl-tRNA.EF-Tu.GTP complex up to the GTP hydrolysis stage on the ribosome. The sequence is that of Elongation factor Ts from Prochlorococcus marinus (strain SARG / CCMP1375 / SS120).